An 874-amino-acid chain; its full sequence is Alanine--tRNA ligase (874 aa).

Histidine 562, histidine 566, cysteine 663, and histidine 667 together coordinate Zn(2+).

Belongs to the class-II aminoacyl-tRNA synthetase family. Zn(2+) serves as cofactor.

It is found in the cytoplasm. It catalyses the reaction tRNA(Ala) + L-alanine + ATP = L-alanyl-tRNA(Ala) + AMP + diphosphate. In terms of biological role, catalyzes the attachment of alanine to tRNA(Ala) in a two-step reaction: alanine is first activated by ATP to form Ala-AMP and then transferred to the acceptor end of tRNA(Ala). Also edits incorrectly charged Ser-tRNA(Ala) and Gly-tRNA(Ala) via its editing domain. This is Alanine--tRNA ligase from Bordetella parapertussis (strain 12822 / ATCC BAA-587 / NCTC 13253).